We begin with the raw amino-acid sequence, 106 residues long: Iron-sulfur cluster assembly protein CyaY (106 aa).

This sequence belongs to the frataxin family.

Functionally, involved in iron-sulfur (Fe-S) cluster assembly. May act as a regulator of Fe-S biogenesis. This Salmonella newport (strain SL254) protein is Iron-sulfur cluster assembly protein CyaY.